The primary structure comprises 429 residues: Adenylosuccinate synthetase (429 aa).

GTP-binding positions include 12–18 (GDEGKGK) and 40–42 (GHT). The Proton acceptor role is filled by Asp13. Positions 13 and 40 each coordinate Mg(2+). IMP is bound by residues 13–16 (DEGK), 38–41 (NAGH), Thr128, Arg142, Gln223, Thr238, and Arg302. His41 serves as the catalytic Proton donor. 298–304 (TTTGRPR) contributes to the substrate binding site. GTP-binding positions include Arg304, 330 to 332 (SID), and 412 to 414 (SVG).

Belongs to the adenylosuccinate synthetase family. In terms of assembly, homodimer. Mg(2+) is required as a cofactor.

It localises to the cytoplasm. The catalysed reaction is IMP + L-aspartate + GTP = N(6)-(1,2-dicarboxyethyl)-AMP + GDP + phosphate + 2 H(+). It participates in purine metabolism; AMP biosynthesis via de novo pathway; AMP from IMP: step 1/2. In terms of biological role, plays an important role in the de novo pathway of purine nucleotide biosynthesis. Catalyzes the first committed step in the biosynthesis of AMP from IMP. In Exiguobacterium sp. (strain ATCC BAA-1283 / AT1b), this protein is Adenylosuccinate synthetase.